A 152-amino-acid polypeptide reads, in one-letter code: Small ribosomal subunit protein uS15 (152 aa).

The protein belongs to the universal ribosomal protein uS15 family. In terms of assembly, part of the 30S ribosomal subunit.

This Methanospirillum hungatei JF-1 (strain ATCC 27890 / DSM 864 / NBRC 100397 / JF-1) protein is Small ribosomal subunit protein uS15.